A 1516-amino-acid polypeptide reads, in one-letter code: Myosin-52 (1516 aa).

The region spanning 7 to 62 (YKGLQCWIPDEQSQWIPGSIKDCRVEGEKAFLTVQDENENETVITVKPDDLNYEGR) is the Myosin N-terminal SH3-like domain. One can recognise a Myosin motor domain in the interval 73–766 (SDADDLTDLS…VTPLLESARD (694 aa)). ATP is bound at residue 167 to 174 (GESGAGKT). The segment at 647 to 669 (LVSLMSTINETNAHYIRCIKPNE) is actin-binding. IQ domains follow at residues 793–813 (RKRVRSFQAVAHGFLSRRHTE), 818–838 (SSNIIKLQSLWRTALKRKEFI), 840–865 (TKNSILKVQSIIRGFLLRQTLEEKTK), 866–886 (HDATLIIQSLWLTFKAHKHYK), and 888–917 (LQYYAVRIQSLWRMKLAKRQLTELKIESTK). Residues 926 to 1034 (YRLESRLFEI…LKSQLKNYDM (109 aa)) are a coiled coil. Phosphoserine is present on residues S1065 and S1072. The Dilute domain occupies 1163–1431 (ERYCVHTLEY…SELSKNIVAE (269 aa)).

It belongs to the TRAFAC class myosin-kinesin ATPase superfamily. Myosin family.

Its subcellular location is the cytoplasm. Its function is as follows. Involved in cell wall deposition where it has a role in the localization of mok1. This Schizosaccharomyces pombe (strain 972 / ATCC 24843) (Fission yeast) protein is Myosin-52 (myo52).